The chain runs to 415 residues: Multifunctional CCA protein (415 aa).

2 residues coordinate ATP: G8 and R11. The CTP site is built by G8 and R11. The Mg(2+) site is built by E21 and D23. 3 residues coordinate ATP: R91, R137, and R140. CTP-binding residues include R91, R137, and R140. One can recognise an HD domain in the interval 226–327 (TGIHTLMTVS…IKLFSAIDVW (102 aa)).

The protein belongs to the tRNA nucleotidyltransferase/poly(A) polymerase family. Bacterial CCA-adding enzyme type 1 subfamily. In terms of assembly, monomer. Can also form homodimers and oligomers. Requires Mg(2+) as cofactor. Ni(2+) is required as a cofactor.

The catalysed reaction is a tRNA precursor + 2 CTP + ATP = a tRNA with a 3' CCA end + 3 diphosphate. It catalyses the reaction a tRNA with a 3' CCA end + 2 CTP + ATP = a tRNA with a 3' CCACCA end + 3 diphosphate. Functionally, catalyzes the addition and repair of the essential 3'-terminal CCA sequence in tRNAs without using a nucleic acid template. Adds these three nucleotides in the order of C, C, and A to the tRNA nucleotide-73, using CTP and ATP as substrates and producing inorganic pyrophosphate. tRNA 3'-terminal CCA addition is required both for tRNA processing and repair. Also involved in tRNA surveillance by mediating tandem CCA addition to generate a CCACCA at the 3' terminus of unstable tRNAs. While stable tRNAs receive only 3'-terminal CCA, unstable tRNAs are marked with CCACCA and rapidly degraded. The chain is Multifunctional CCA protein from Sodalis glossinidius (strain morsitans).